We begin with the raw amino-acid sequence, 282 residues long: Large ribosomal subunit protein uL4c (282 aa).

The N-terminal 43 residues, 1–43 (MAASLSFFSSSIFLSNPNIQSSKHLLFRSPKQLSVAAIATIRS), are a transit peptide targeting the chloroplast. Disordered regions lie at residues 86 to 133 (RNQR…GGVV) and 251 to 282 (RYGD…ESSE). The span at 255 to 282 (ENEWEDEEEDDQEDNDGGEAEESTESSE) shows a compositional bias: acidic residues.

This sequence belongs to the universal ribosomal protein uL4 family. As to quaternary structure, part of the 50S ribosomal subunit.

It localises to the plastid. It is found in the chloroplast. Functionally, this protein binds directly and specifically to 23S rRNA. May play a role in plastid transcriptional regulation. The sequence is that of Large ribosomal subunit protein uL4c (RPL4) from Nicotiana tabacum (Common tobacco).